The following is a 171-amino-acid chain: UPF0312 protein SAR2769 (171 aa).

The protein belongs to the UPF0312 family.

The sequence is that of UPF0312 protein SAR2769 from Staphylococcus aureus (strain MRSA252).